Consider the following 84-residue polypeptide: Small ribosomal subunit protein bS20 (84 aa).

The segment at 1 to 25 (MPVIKSAMKRVRTSEKAAARNRSQM) is disordered.

The protein belongs to the bacterial ribosomal protein bS20 family.

Binds directly to 16S ribosomal RNA. This chain is Small ribosomal subunit protein bS20, found in Pediococcus pentosaceus (strain ATCC 25745 / CCUG 21536 / LMG 10740 / 183-1w).